Consider the following 486-residue polypeptide: ATP synthase subunit beta (486 aa).

170–177 (GGAGVGKT) is an ATP binding site.

This sequence belongs to the ATPase alpha/beta chains family. As to quaternary structure, F-type ATPases have 2 components, CF(1) - the catalytic core - and CF(0) - the membrane proton channel. CF(1) has five subunits: alpha(3), beta(3), gamma(1), delta(1), epsilon(1). CF(0) has three main subunits: a(1), b(2) and c(9-12). The alpha and beta chains form an alternating ring which encloses part of the gamma chain. CF(1) is attached to CF(0) by a central stalk formed by the gamma and epsilon chains, while a peripheral stalk is formed by the delta and b chains.

The protein resides in the cell membrane. It carries out the reaction ATP + H2O + 4 H(+)(in) = ADP + phosphate + 5 H(+)(out). Produces ATP from ADP in the presence of a proton gradient across the membrane. The catalytic sites are hosted primarily by the beta subunits. The chain is ATP synthase subunit beta from Clavibacter michiganensis subsp. michiganensis (strain NCPPB 382).